Reading from the N-terminus, the 615-residue chain is MGASHSTVSDPHRFAVAITGSDDDVRSLQAHPTKSYDYIVVGGGTAGCVLASRLSEDSRVNVLLVEAGYSNHGVTNSIIPLAFPMLMKSKYDWNYETVGMAGINGRTSYWPRGRLLGGTSSINGSMYHRCAPEDFSAWVEEGAKGWEYENMKPYFRKAEGYNPHPDHPNIDPALHGTVGPAKVTHGPIAFLSQPITKDILQSSINVGIRQVHDFNTDVGPTGVGLFARNVFPNGTRVSAATGYLTPSVLARPNLTVAVECMAEKIVLSSDEKVPRAKGLIFSTSRDGQRFYVPASKELILSSGVIGTPQVLMLSGIGPAAELAKHNIPVVRDLPVGEYLQDHFSPGPMLIRAKKGTWDFILRPLGGLLAMVKWFFFGKGPLSSLSVQVACFVRSDDKTFAHPQLPMHDGAKKYQVKDCCSGPTAPDIELFFAPFLAPPLGMKYWPFPGLTSGMLLLKPASYGTVKLASRNAWDYPLIDPNYLSHESDIALSIMGMRLLARIARTKPFADSLDLPEDSDDKTSVFWPTDCNPDTVSDDDLEAWARLHGQSTGHPTSSARMGGSPSTSVVDSKLKVHGVEGLRVCDASCFPTQVSGHPAAVVVAVAERAADLIKGVA.

Residues 45–46, 66–67, and 123–126 each bind FAD; these read TA, EA, and NGSM. Catalysis depends on His-552, which acts as the Proton acceptor. FAD is bound by residues Ala-585 and 596–597; that span reads PA.

This sequence belongs to the GMC oxidoreductase family. In terms of assembly, homodimer. It depends on FAD as a cofactor.

It functions in the pathway mycotoxin biosynthesis. In terms of biological role, dehydrogenase; part of the gene cluster that mediates the biosynthesis of strobilurin A, an antifungal polyketide that contains a key beta-methoxyacrylate toxophore that targets the complex III of the mitochondrial electron transport chain. Strobilurin biosynthesis begins with construction of benzoyl CoA by step-wise elimination of ammonia from phenylalanine by the phenylalanine ammonia-lyase str11, oxygenation by str8 and retro-Claisen reaction to form benzoic acid, which is activated to its CoA thiolester benzoyl CoA by the dedicated CoA ligase str10. Benzoyl CoA forms the starter unit for the highly reducing polyketide synthase stpks1 that produces the polyketide prestrobilutin A. The FAD-dependent oxygenase str9 then catalyzes the key oxidative rearrangement responsible for the creation of the beta-methoxyacrylate toxophore. Str9 performs epoxidation of the 2,3 olefin of prestrobilutin A, followed by Meinwald rearrangement to furnish the aldehyde intermediate. Rapid enolization of the aldehyde intermediate would give the beta-methoxyacrylate skeleton and methylations catalyzed by str2 and str3 complete the synthesis and lead to the production of strobilurin A. The short-chain dehydrogenase stl2 and the dehydrogenase str4 play a role in the shunt pathway leading to the production of bolineol. The cluster encodes no obvious halogenase gene that could be involved in production of strobilurin B, nor any obvious dimethylallyl-transferase that could be involved in the production of strobilurin G. It is possible that unknown proteins encoded in, or near, the cluster (such as str1 or stl1) may form new classes of halogenases or dimethylally-transferases, or that the responsible genes are located elsewhere on the genome. Similarly, proteins encoded by str5/str6 hydrolases appear to have no chemical role in the biosynthesis of strobilurin A. Finally, no obvious self-resistance gene is found within the cluster. In Strobilurus tenacellus, this protein is Dehydrogenase str4.